A 284-amino-acid chain; its full sequence is Deoxyribonuclease-1 (284 aa).

The N-terminal stretch at 1-22 is a signal peptide; it reads MRGARLMGALLALAGLLQGALA. A glycan (N-linked (GlcNAc...) asparagine) is linked at Asn-40. The active site involves Glu-100. Cysteines 123 and 126 form a disulfide. Asn-128 carries N-linked (GlcNAc...) asparagine glycosylation. His-156 is a catalytic residue. Cysteines 195 and 231 form a disulfide.

This sequence belongs to the DNase I family. Ca(2+) serves as cofactor. The cofactor is Mg(2+). In terms of tissue distribution, highest expression in pancreas.

The protein resides in the secreted. It is found in the zymogen granule. Its subcellular location is the nucleus envelope. The catalysed reaction is Endonucleolytic cleavage to 5'-phosphodinucleotide and 5'-phosphooligonucleotide end-products.. Its function is as follows. Serum endocuclease secreted into body fluids by a wide variety of exocrine and endocrine organs. Expressed by non-hematopoietic tissues and preferentially cleaves protein-free DNA. Among other functions, seems to be involved in cell death by apoptosis. Binds specifically to G-actin and blocks actin polymerization. Together with DNASE1L3, plays a key role in degrading neutrophil extracellular traps (NETs). NETs are mainly composed of DNA fibers and are released by neutrophils to bind pathogens during inflammation. Degradation of intravascular NETs by DNASE1 and DNASE1L3 is required to prevent formation of clots that obstruct blood vessels and cause organ damage following inflammation. The polypeptide is Deoxyribonuclease-1 (DNASE1) (Canis lupus familiaris (Dog)).